The chain runs to 128 residues: 14.7 kDa protein (128 aa).

The segment at 65–94 adopts a C4-type zinc-finger fold; it reads CFDCGAYLYDDHVCKRFTSRSNSDCLSVIH.

Its function is as follows. May act as a regulatory factor during viral transcription. The chain is 14.7 kDa protein from Shallot virus X (ShVX).